The primary structure comprises 242 residues: U1 small nuclear ribonucleoprotein C (242 aa).

The Matrin-type; degenerate zinc finger occupies 3–35 (YLGDYCDVYLTHDSMSVRKAHNSGRNHLRNVVE). A disordered region spans residues 60–242 (GQASSNPMLQ…SSPGPSQEGK (183 aa)). Composition is skewed to pro residues over residues 90–107 (MLPP…PGAP), 136–149 (PPMP…PLPN), 156–183 (PFPP…PPIP), and 201–213 (PVPP…PGAP). A compositionally biased stretch (polar residues) spans 231 to 242 (PASSPGPSQEGK).

It belongs to the U1 small nuclear ribonucleoprotein C family. As to quaternary structure, U1 snRNP is composed of the 7 core Sm proteins B/B', D1, D2, D3, E, F and G that assemble in a heptameric protein ring on the Sm site of the small nuclear RNA to form the core snRNP, and at least 3 U1 snRNP-specific proteins U1-70K, U1-A and U1-C. U1-C interacts with U1 snRNA and the 5' splice-site region of the pre-mRNA.

It localises to the nucleus. Its function is as follows. Component of the spliceosomal U1 snRNP, which is essential for recognition of the pre-mRNA 5' splice-site and the subsequent assembly of the spliceosome. U1-C is directly involved in initial 5' splice-site recognition for both constitutive and regulated alternative splicing. The interaction with the 5' splice-site seems to precede base-pairing between the pre-mRNA and the U1 snRNA. Stimulates commitment or early (E) complex formation by stabilizing the base pairing of the 5' end of the U1 snRNA and the 5' splice-site region. The sequence is that of U1 small nuclear ribonucleoprotein C from Ajellomyces capsulatus (strain G186AR / H82 / ATCC MYA-2454 / RMSCC 2432) (Darling's disease fungus).